We begin with the raw amino-acid sequence, 92 residues long: Neurophysin 2 (92 aa).

7 disulfide bridges follow: C10-C54, C13-C27, C21-C44, C28-C34, C61-C73, C67-C85, and C74-C79.

The protein belongs to the vasopressin/oxytocin family. As to quaternary structure, there is an equilibrium between the monomeric and dimeric forms. On peptide binding the dimeric form predominates. A shorter neurophysin molecule (1-90) also exists and is probably derived from the complete protein by proteolytic degradation (in vivo or after extraction).

The protein resides in the secreted. In terms of biological role, neurophysin 2 specifically binds vasopressin. The polypeptide is Neurophysin 2 (AVP) (Loxodonta africana (African elephant)).